The chain runs to 194 residues: Orotate phosphoribosyltransferase (194 aa).

A 5-phospho-alpha-D-ribose 1-diphosphate-binding site is contributed by 116 to 124 (EDIVTTGLS). Thr-120 and Arg-148 together coordinate orotate.

Belongs to the purine/pyrimidine phosphoribosyltransferase family. PyrE subfamily. As to quaternary structure, homodimer. Requires Mg(2+) as cofactor.

The catalysed reaction is orotidine 5'-phosphate + diphosphate = orotate + 5-phospho-alpha-D-ribose 1-diphosphate. The protein operates within pyrimidine metabolism; UMP biosynthesis via de novo pathway; UMP from orotate: step 1/2. In terms of biological role, catalyzes the transfer of a ribosyl phosphate group from 5-phosphoribose 1-diphosphate to orotate, leading to the formation of orotidine monophosphate (OMP). In Caulobacter vibrioides (strain ATCC 19089 / CIP 103742 / CB 15) (Caulobacter crescentus), this protein is Orotate phosphoribosyltransferase.